The following is a 793-amino-acid chain: Phenylalanine--tRNA ligase beta subunit (793 aa).

The tRNA-binding domain occupies 39–148; sequence AGQFTHVIVA…DEAPIGMDLR (110 aa). Residues 401–477 form the B5 domain; sequence PGTVSFLFDT…RLYGYDKLQA (77 aa). Residues D455, D461, E464, and E465 each coordinate Mg(2+). An FDX-ACB domain is found at 698–792; sequence SKYPQIRRDL…LENEFSILLR (95 aa).

Belongs to the phenylalanyl-tRNA synthetase beta subunit family. Type 1 subfamily. In terms of assembly, tetramer of two alpha and two beta subunits. It depends on Mg(2+) as a cofactor.

It localises to the cytoplasm. The catalysed reaction is tRNA(Phe) + L-phenylalanine + ATP = L-phenylalanyl-tRNA(Phe) + AMP + diphosphate + H(+). The polypeptide is Phenylalanine--tRNA ligase beta subunit (Legionella pneumophila (strain Lens)).